A 515-amino-acid chain; its full sequence is MGHNSSWVSPNTSHPRNTSGAEAGANLSAFGELSEAQLYRQFTTTVQVVIFIGSLLGNFMVLWSTCRTTVFKSVTNRFIKNLACSGICASVVCVPFDIILSSSPHCCWWIYTMLFCKVLKFLHKVFCSVTVLSFPAIALDRYYSVLYPLERKISDAKSRELVMYIWAHAVVASVPVFAVTNVADIYAMSTCTEVWSNSLGHLVYVLIYNVTTVIVPVAVVFLFLILIRRALSASQKKKVIIAALRTPQNTISIPYASQREAELHATLLSMVTVFILCSVPYATLVVYQTVLNVPNTSVFLLLTAIWLPKVSLLANPVLFLTVNKSVRKCLVGTLVQLHHRYSRRNVVSTGSGVAEPSLEPSMRSGSQLLEMFHIGQQQIFKPSEDEEESEAKYLGSADFQAKEVLTSCPEGEQEPPQLAPSVPPPGTVDSEPRVSPVAPMESGIFPDKYSLQFGFGPFELPPQWLSETRNSKKRLLPPLGNTPEELIQTKVPRVNRVERKMSRNNKVSIFPKVDS.

The Extracellular segment spans residues 1 to 41 (MGHNSSWVSPNTSHPRNTSGAEAGANLSAFGELSEAQLYRQ). N-linked (GlcNAc...) asparagine glycosylation is found at Asn-4, Asn-11, Asn-17, and Asn-26. Residues 42–64 (FTTTVQVVIFIGSLLGNFMVLWS) form a helical membrane-spanning segment. The Cytoplasmic portion of the chain corresponds to 65–77 (TCRTTVFKSVTNR). A helical membrane pass occupies residues 78 to 98 (FIKNLACSGICASVVCVPFDI). The Extracellular portion of the chain corresponds to 99–108 (ILSSSPHCCW). A helical transmembrane segment spans residues 109-129 (WIYTMLFCKVLKFLHKVFCSV). The Cytoplasmic segment spans residues 130 to 157 (TVLSFPAIALDRYYSVLYPLERKISDAK). A helical membrane pass occupies residues 158-177 (SRELVMYIWAHAVVASVPVF). Residues 178 to 204 (AVTNVADIYAMSTCTEVWSNSLGHLVY) lie on the Extracellular side of the membrane. Residues 205 to 225 (VLIYNVTTVIVPVAVVFLFLI) traverse the membrane as a helical segment. Residues 226 to 264 (LIRRALSASQKKKVIIAALRTPQNTISIPYASQREAELH) lie on the Cytoplasmic side of the membrane. The helical transmembrane segment at 265–285 (ATLLSMVTVFILCSVPYATLV) threads the bilayer. The Extracellular segment spans residues 286–301 (VYQTVLNVPNTSVFLL). A helical membrane pass occupies residues 302-322 (LTAIWLPKVSLLANPVLFLTV). Topologically, residues 323–515 (NKSVRKCLVG…KVSIFPKVDS (193 aa)) are cytoplasmic. The segment at 407 to 435 (SCPEGEQEPPQLAPSVPPPGTVDSEPRVS) is disordered. A compositionally biased stretch (pro residues) spans 417-426 (QLAPSVPPPG).

Belongs to the G-protein coupled receptor 1 family. As to expression, expressed mainly in the brain, with prominent expression in the SCN (at protein level).

The protein localises to the cell membrane. Its function is as follows. Orphan receptor involved in normal circadian rhythm behavior. Acts through the G-protein subclass G(z)-alpha and has an agonist-independent basal activity to repress cAMP production. This Mus musculus (Mouse) protein is G-protein coupled receptor 176 (Gpr176).